Here is a 721-residue protein sequence, read N- to C-terminus: Long-chain-fatty-acid--CoA ligase ACSBG1 (721 aa).

Positions 1 to 64 are disordered; the sequence is MPRGSEAGYC…SHGLELSAPE (64 aa). A compositionally biased stretch (polar residues) spans 26-52; it reads QQGASLGTSQDNSQTSSLIDGQTLSKE. A phosphoserine mark is found at Ser-34, Ser-50, Ser-53, and Ser-70. ATP-binding positions include 279–287, 469–474, Asp-547, and Arg-562; these read TSGTTGNPK and AGYGLS. Residue Tyr-655 is modified to Phosphotyrosine. Residue Lys-698 coordinates ATP.

Belongs to the ATP-dependent AMP-binding enzyme family. Bubblegum subfamily. Mainly expressed in brain. Also expressed in adrenal gland and testis. In brain, it is present in cerebral cortical and cerebellar neurons and in steroidogenic cells of the adrenal gland, testis and ovary (at protein level).

The protein resides in the cytoplasm. It localises to the cytoplasmic vesicle. Its subcellular location is the microsome. The protein localises to the endoplasmic reticulum. It is found in the cell membrane. The enzyme catalyses a long-chain fatty acid + ATP + CoA = a long-chain fatty acyl-CoA + AMP + diphosphate. It carries out the reaction (E)-hexadec-2-enoate + ATP + CoA = (2E)-hexadecenoyl-CoA + AMP + diphosphate. The catalysed reaction is hexadecanoate + ATP + CoA = hexadecanoyl-CoA + AMP + diphosphate. Its function is as follows. Catalyzes the conversion of fatty acids such as long-chain and very long-chain fatty acids to their active form acyl-CoAs for both synthesis of cellular lipids, and degradation via beta-oxidation. Can activate diverse saturated, monosaturated and polyunsaturated fatty acids. This chain is Long-chain-fatty-acid--CoA ligase ACSBG1, found in Mus musculus (Mouse).